Reading from the N-terminus, the 457-residue chain is ATP synthase subunit beta (457 aa).

147-154 (GGAGVGKT) contacts ATP.

This sequence belongs to the ATPase alpha/beta chains family. F-type ATPases have 2 components, CF(1) - the catalytic core - and CF(0) - the membrane proton channel. CF(1) has five subunits: alpha(3), beta(3), gamma(1), delta(1), epsilon(1). CF(0) has three main subunits: a(1), b(2) and c(9-12). The alpha and beta chains form an alternating ring which encloses part of the gamma chain. CF(1) is attached to CF(0) by a central stalk formed by the gamma and epsilon chains, while a peripheral stalk is formed by the delta and b chains.

The protein resides in the cell inner membrane. The catalysed reaction is ATP + H2O + 4 H(+)(in) = ADP + phosphate + 5 H(+)(out). Produces ATP from ADP in the presence of a proton gradient across the membrane. The catalytic sites are hosted primarily by the beta subunits. The polypeptide is ATP synthase subunit beta (Pasteurella multocida (strain Pm70)).